The following is a 370-amino-acid chain: 3-dehydroquinate synthase (370 aa).

Residues Gly112 to Asp116, Thr136 to Ser137, Lys149, Lys158, and Thr176 to Thr179 each bind NAD(+). The Zn(2+) site is built by Glu191, His254, and His276.

The protein belongs to the sugar phosphate cyclases superfamily. Dehydroquinate synthase family. Requires NAD(+) as cofactor. It depends on Co(2+) as a cofactor. The cofactor is Zn(2+).

Its subcellular location is the cytoplasm. The enzyme catalyses 7-phospho-2-dehydro-3-deoxy-D-arabino-heptonate = 3-dehydroquinate + phosphate. It functions in the pathway metabolic intermediate biosynthesis; chorismate biosynthesis; chorismate from D-erythrose 4-phosphate and phosphoenolpyruvate: step 2/7. Its function is as follows. Catalyzes the conversion of 3-deoxy-D-arabino-heptulosonate 7-phosphate (DAHP) to dehydroquinate (DHQ). The chain is 3-dehydroquinate synthase from Xanthomonas axonopodis pv. citri (strain 306).